Reading from the N-terminus, the 173-residue chain is RNA pyrophosphohydrolase (173 aa).

Residues 11-164 enclose the Nudix hydrolase domain; sequence PYRRCVGVVV…KKHVYRKVVS (154 aa). Positions 52–73 match the Nudix box motif; it reads GGIDEGEEPLDAACRELYEETG.

This sequence belongs to the Nudix hydrolase family. RppH subfamily. It depends on a divalent metal cation as a cofactor.

Its function is as follows. Accelerates the degradation of transcripts by removing pyrophosphate from the 5'-end of triphosphorylated RNA, leading to a more labile monophosphorylated state that can stimulate subsequent ribonuclease cleavage. This is RNA pyrophosphohydrolase from Bartonella quintana (strain Toulouse) (Rochalimaea quintana).